The following is a 155-amino-acid chain: Small ribosomal subunit protein uS7cz/uS7cy (155 aa).

It belongs to the universal ribosomal protein uS7 family. In terms of assembly, part of the 30S ribosomal subunit.

It localises to the plastid. Its function is as follows. One of the primary rRNA binding proteins, it binds directly to 16S rRNA where it nucleates assembly of the head domain of the 30S subunit. This is Small ribosomal subunit protein uS7cz/uS7cy (rps7-A) from Cuscuta obtusiflora (Peruvian dodder).